The sequence spans 337 residues: tRNA N6-adenosine threonylcarbamoyltransferase (337 aa).

His-107 and His-111 together coordinate Fe cation. Substrate-binding positions include 129-133 (LISGG), Asp-162, Gly-175, and Asn-271. Position 299 (Asp-299) interacts with Fe cation.

This sequence belongs to the KAE1 / TsaD family. It depends on Fe(2+) as a cofactor.

The protein localises to the cytoplasm. It catalyses the reaction L-threonylcarbamoyladenylate + adenosine(37) in tRNA = N(6)-L-threonylcarbamoyladenosine(37) in tRNA + AMP + H(+). In terms of biological role, required for the formation of a threonylcarbamoyl group on adenosine at position 37 (t(6)A37) in tRNAs that read codons beginning with adenine. Is involved in the transfer of the threonylcarbamoyl moiety of threonylcarbamoyl-AMP (TC-AMP) to the N6 group of A37, together with TsaE and TsaB. TsaD likely plays a direct catalytic role in this reaction. The polypeptide is tRNA N6-adenosine threonylcarbamoyltransferase (Sulfurovum sp. (strain NBC37-1)).